The chain runs to 189 residues: Probable nicotinate-nucleotide adenylyltransferase (189 aa).

This sequence belongs to the NadD family.

The catalysed reaction is nicotinate beta-D-ribonucleotide + ATP + H(+) = deamido-NAD(+) + diphosphate. It functions in the pathway cofactor biosynthesis; NAD(+) biosynthesis; deamido-NAD(+) from nicotinate D-ribonucleotide: step 1/1. Catalyzes the reversible adenylation of nicotinate mononucleotide (NaMN) to nicotinic acid adenine dinucleotide (NaAD). This chain is Probable nicotinate-nucleotide adenylyltransferase, found in Bacillus cereus (strain Q1).